The sequence spans 659 residues: DNA ligase (659 aa).

NAD(+) contacts are provided by residues 32–36 (DFEYD), 81–82 (SL), and E111. Catalysis depends on K113, which acts as the N6-AMP-lysine intermediate. Residues R134, E168, K280, and K304 each coordinate NAD(+). Residues C398, C401, C416, and C421 each coordinate Zn(2+). The region spanning 585 to 655 (ETNSIYFQKR…KELNIPIINE (71 aa)) is the BRCT domain.

This sequence belongs to the NAD-dependent DNA ligase family. LigA subfamily. Requires Mg(2+) as cofactor. Mn(2+) serves as cofactor.

It carries out the reaction NAD(+) + (deoxyribonucleotide)n-3'-hydroxyl + 5'-phospho-(deoxyribonucleotide)m = (deoxyribonucleotide)n+m + AMP + beta-nicotinamide D-nucleotide.. Functionally, DNA ligase that catalyzes the formation of phosphodiester linkages between 5'-phosphoryl and 3'-hydroxyl groups in double-stranded DNA using NAD as a coenzyme and as the energy source for the reaction. It is essential for DNA replication and repair of damaged DNA. This chain is DNA ligase, found in Mycoplasma genitalium (strain ATCC 33530 / DSM 19775 / NCTC 10195 / G37) (Mycoplasmoides genitalium).